The chain runs to 301 residues: UBX domain-containing protein 2 (301 aa).

Residues 1 to 61 (MSRNIRTFRD…AARGPDSEAH (61 aa)) are disordered. Residues 89 to 153 (TISLTLHLWS…KVNRHHEEYV (65 aa)) enclose the SEP domain. A disordered region spans residues 176–200 (GQSSSSATTAGTSSATTDHNPDHTA). Residues 178–192 (SSSSATTAGTSSATT) are compositionally biased toward low complexity. The region spanning 218–295 (MNEPTTNIQI…NVLNSVVAVK (78 aa)) is the UBX domain.

This sequence belongs to the NSFL1C family. In terms of assembly, interacts with cdc-48.1 (via N-terminus) and cdc-48.2 (via N-terminus). Interacts with kinase air-1. Expressed in the germline (at protein level). Expressed in spermatocytes but not in mature sperm (at protein level). Ubiquitously expressed. Predominantly expressed in the spermatheca.

It localises to the cytoplasm. The protein localises to the perinuclear region. The protein resides in the nucleus. Its subcellular location is the cytoskeleton. It is found in the microtubule organizing center. It localises to the centrosome. Ubiquitin-binding protein which acts as an adapter for ATPase cdc-48.1 and/or cdc-48.2, conferring substrate specificity. Together with ubxn-2 and ubxn-3, plays a role in hermaphrodite spermatogenesis probably by promoting the degradation of sex determination terminal factor tra-1. Probably in association with ATPase cdc-48.1 or/and cdc-48.2, regulates the centrosomal levels of kinase air-1 levels during mitotic progression by promoting air-1 removal from centrosomes in prophase. Also, regulates spindle orientation in the one-cell embryo by controlling centration and rotation of the pronuclei-centrosome complex in prophase. This chain is UBX domain-containing protein 2, found in Caenorhabditis elegans.